The chain runs to 651 residues: Coronin-like protein (651 aa).

4 WD repeats span residues 79 to 110 (GHTA…GIWD), 138 to 169 (GHAR…KLWN), 180 to 210 (KHPD…RVWN), and 226 to 257 (AKNQ…GIWD). The interval 408–609 (APSFHEAKRP…TSPKSLGLKK (202 aa)) is disordered. The segment covering 427–451 (LEEKKEQPKVEKPISESEKEVKQEA) has biased composition (basic and acidic residues). 3 positions are modified to phosphoserine: serine 441, serine 454, and serine 456. Residues 452–465 (PKSPSPLKSASSSS) are compositionally biased toward low complexity. Residues threonine 517 and threonine 529 each carry the phosphothreonine modification. Composition is skewed to basic and acidic residues over residues 523 to 540 (ETKK…ELKP) and 547 to 572 (TDRK…EQEK). Residues serine 573 and serine 579 each carry the phosphoserine modification. Residues 578 to 590 (SSITAAKTAITAS) are compositionally biased toward low complexity. Residues 618 to 650 (VLQLEDVVDKLTKANLDKDERLLKLEQKIGELS) are a coiled coil.

Belongs to the WD repeat coronin family. Binds to F-actin.

In Saccharomyces cerevisiae (strain ATCC 204508 / S288c) (Baker's yeast), this protein is Coronin-like protein (CRN1).